A 646-amino-acid chain; its full sequence is Heat shock 70 kDa protein (646 aa).

Over residues 613 to 632 (GGAPGGMPGAAPGGFPGGAP) the composition is skewed to gly residues. Residues 613–646 (GGAPGGMPGAAPGGFPGGAPGSNDNEGPTVEEVD) are disordered.

It belongs to the heat shock protein 70 family.

The polypeptide is Heat shock 70 kDa protein (hsps-1) (Neurospora crassa (strain ATCC 24698 / 74-OR23-1A / CBS 708.71 / DSM 1257 / FGSC 987)).